Consider the following 203-residue polypeptide: Large ribosomal subunit protein eL15 (203 aa).

Residues 160–186 are disordered; sequence ESRGLTSTGKRSRGLNKGHRYNKTRAG. Basic residues predominate over residues 169-186; that stretch reads KRSRGLNKGHRYNKTRAG.

It belongs to the eukaryotic ribosomal protein eL15 family. As to quaternary structure, component of the large ribosomal subunit (LSU). Mature N.crassa ribosomes consist of a small (40S) and a large (60S) subunit. The 40S small subunit contains 1 molecule of ribosomal RNA (18S rRNA) and at least 32 different proteins. The large 60S subunit contains 3 rRNA molecules (26S, 5.8S and 5S rRNA) and at least 42 different proteins.

Its subcellular location is the cytoplasm. Functionally, component of the ribosome, a large ribonucleoprotein complex responsible for the synthesis of proteins in the cell. The small ribosomal subunit (SSU) binds messenger RNAs (mRNAs) and translates the encoded message by selecting cognate aminoacyl-transfer RNA (tRNA) molecules. The large subunit (LSU) contains the ribosomal catalytic site termed the peptidyl transferase center (PTC), which catalyzes the formation of peptide bonds, thereby polymerizing the amino acids delivered by tRNAs into a polypeptide chain. The nascent polypeptides leave the ribosome through a tunnel in the LSU and interact with protein factors that function in enzymatic processing, targeting, and the membrane insertion of nascent chains at the exit of the ribosomal tunnel. The polypeptide is Large ribosomal subunit protein eL15 (rpl-15) (Neurospora crassa (strain ATCC 24698 / 74-OR23-1A / CBS 708.71 / DSM 1257 / FGSC 987)).